The chain runs to 302 residues: Proline dehydrogenase 1 (302 aa).

K95 lines the substrate pocket. D129 is a catalytic residue. FAD contacts are provided by M130 and Q158. The active site involves R179. Residues 182 to 184 (KGA) and 221 to 222 (TH) contribute to the FAD site. 283–284 (RR) provides a ligand contact to substrate.

It belongs to the proline dehydrogenase family. It depends on FAD as a cofactor.

The enzyme catalyses L-proline + a quinone = (S)-1-pyrroline-5-carboxylate + a quinol + H(+). It participates in amino-acid degradation; L-proline degradation into L-glutamate; L-glutamate from L-proline: step 1/2. In terms of biological role, converts proline to delta-1-pyrroline-5-carboxylate. The sequence is that of Proline dehydrogenase 1 (fadM) from Bacillus subtilis (strain 168).